The chain runs to 81 residues: Acyl carrier protein (81 aa).

One can recognise a Carrier domain in the interval 4 to 79 (SEILEKVKAI…DVLDFINNKV (76 aa)). At S39 the chain carries O-(pantetheine 4'-phosphoryl)serine.

It belongs to the acyl carrier protein (ACP) family. Post-translationally, 4'-phosphopantetheine is transferred from CoA to a specific serine of apo-ACP by AcpS. This modification is essential for activity because fatty acids are bound in thioester linkage to the sulfhydryl of the prosthetic group.

It is found in the cytoplasm. It participates in lipid metabolism; fatty acid biosynthesis. Functionally, carrier of the growing fatty acid chain in fatty acid biosynthesis. This Thermosynechococcus vestitus (strain NIES-2133 / IAM M-273 / BP-1) protein is Acyl carrier protein.